The chain runs to 637 residues: DNA primase (637 aa).

The CHC2-type zinc-finger motif lies at 39–63 (CPFHGEKTPSFNVNAEKGFYHCFGC). A Toprim domain is found at 257–338 (HEVYLMEGFM…QIVKVPEGLD (82 aa)). Residues glutamate 263, aspartate 307, and aspartate 309 each contribute to the Mg(2+) site.

Belongs to the DnaG primase family. In terms of assembly, monomer. Interacts with DnaB. Requires Zn(2+) as cofactor. Mg(2+) serves as cofactor.

The enzyme catalyses ssDNA + n NTP = ssDNA/pppN(pN)n-1 hybrid + (n-1) diphosphate.. In terms of biological role, RNA polymerase that catalyzes the synthesis of short RNA molecules used as primers for DNA polymerase during DNA replication. The polypeptide is DNA primase (Lactococcus lactis subsp. lactis (strain IL1403) (Streptococcus lactis)).